The sequence spans 141 residues: Large ribosomal subunit protein uL11 (141 aa).

This sequence belongs to the universal ribosomal protein uL11 family. Part of the ribosomal stalk of the 50S ribosomal subunit. Interacts with L10 and the large rRNA to form the base of the stalk. L10 forms an elongated spine to which L12 dimers bind in a sequential fashion forming a multimeric L10(L12)X complex. Post-translationally, one or more lysine residues are methylated.

In terms of biological role, forms part of the ribosomal stalk which helps the ribosome interact with GTP-bound translation factors. The chain is Large ribosomal subunit protein uL11 from Petrotoga mobilis (strain DSM 10674 / SJ95).